The sequence spans 136 residues: Histone H3-like 3 (136 aa).

A compositionally biased stretch (basic residues) spans methionine 1–lysine 15. The disordered stretch occupies residues methionine 1 to tyrosine 42. An N6,N6,N6-trimethyllysine; alternate mark is found at lysine 5 and lysine 10. An N6,N6-dimethyllysine; alternate mark is found at lysine 5 and lysine 10. 2 positions are modified to N6-methyllysine; alternate: lysine 5 and lysine 10. Lysine 10 carries the N6-acetyllysine; alternate modification. Serine 11 carries the phosphoserine modification. N6-acetyllysine is present on lysine 15. An N6-methyllysine; alternate mark is found at lysine 24 and lysine 28. Residue lysine 24 is modified to N6-acetyllysine; alternate. At lysine 28 the chain carries N6,N6,N6-trimethyllysine; alternate. Lysine 28 carries the post-translational modification N6,N6-dimethyllysine; alternate. Position 29 is a phosphoserine (serine 29). Lysine 37 bears the N6,N6,N6-trimethyllysine; alternate mark. N6,N6-dimethyllysine; alternate is present on lysine 37. An N6-methyllysine; alternate modification is found at lysine 37.

This sequence belongs to the histone H3 family. As to quaternary structure, the nucleosome is a histone octamer containing two molecules each of H2A, H2B, H3 and H4 assembled in one H3-H4 heterotetramer and two H2A-H2B heterodimers. The octamer wraps approximately 147 bp of DNA. Expressed in roots, seedlings, leaves and open flowers.

It localises to the nucleus. Its subcellular location is the chromosome. Its function is as follows. Core component of nucleosome. Nucleosomes wrap and compact DNA into chromatin, limiting DNA accessibility to the cellular machineries which require DNA as a template. Histones thereby play a central role in transcription regulation, DNA repair, DNA replication and chromosomal stability. DNA accessibility is regulated via a complex set of post-translational modifications of histones, also called histone code, and nucleosome remodeling. The chain is Histone H3-like 3 from Arabidopsis thaliana (Mouse-ear cress).